We begin with the raw amino-acid sequence, 740 residues long: Protein SIEVE ELEMENT OCCLUSION B (740 aa).

The segment covering 1–23 (MESLIKSQHAQQLAGHKNTTGKT) has biased composition (polar residues). The disordered stretch occupies residues 1–27 (MESLIKSQHAQQLAGHKNTTGKTPSME).

Can form homodimer. Expressed in phloem sieve elements.

Its function is as follows. Scaffold protein required to form the phloem filament matrix in sieve elements. The polypeptide is Protein SIEVE ELEMENT OCCLUSION B (Arabidopsis thaliana (Mouse-ear cress)).